Consider the following 309-residue polypeptide: MINGVLLLHKERGMTSHDCVFKVRKILHTKKVGHTGTLDPEVSGVLPICIGRATKIVEYLTDKSKTYDAEITIGFSTTTEDQTGEIVEEKKVQNPISEEEIDAALKQFQGTIEQIPPMFSAVKIGGKKLYEYAREGIEIERPSREISIHRIERTTPALFENGTVSFRFTVLCSKGTYVRTLAVDIGKKLGFPAHMSHLIRTGSGDFTLDECITLDELRDISEEGTVDEHLVPIERALNHLPKWEINDTLASKVENGAVLPMPDEFAHFAEEDRVAVFAPSGRCMAIYMKHPTKQNLMKPAKILSQDKQS.

Asp-39 (nucleophile) is an active-site residue.

This sequence belongs to the pseudouridine synthase TruB family. Type 1 subfamily.

It carries out the reaction uridine(55) in tRNA = pseudouridine(55) in tRNA. In terms of biological role, responsible for synthesis of pseudouridine from uracil-55 in the psi GC loop of transfer RNAs. In Bacillus pumilus (strain SAFR-032), this protein is tRNA pseudouridine synthase B.